Consider the following 677-residue polypeptide: Methionine--tRNA ligase (677 aa).

A 'HIGH' region motif is present at residues proline 15 to histidine 25. The Zn(2+) site is built by cysteine 146, cysteine 149, cysteine 159, and cysteine 162. Positions lysine 333–serine 337 match the 'KMSKS' region motif. ATP is bound at residue lysine 336. Residues aspartate 575–lysine 677 enclose the tRNA-binding domain.

Belongs to the class-I aminoacyl-tRNA synthetase family. MetG type 1 subfamily. Homodimer. Zn(2+) serves as cofactor.

The protein resides in the cytoplasm. The catalysed reaction is tRNA(Met) + L-methionine + ATP = L-methionyl-tRNA(Met) + AMP + diphosphate. Its function is as follows. Is required not only for elongation of protein synthesis but also for the initiation of all mRNA translation through initiator tRNA(fMet) aminoacylation. This Shigella dysenteriae serotype 1 (strain Sd197) protein is Methionine--tRNA ligase.